The following is a 156-amino-acid chain: 6,7-dimethyl-8-ribityllumazine synthase (156 aa).

5-amino-6-(D-ribitylamino)uracil contacts are provided by residues phenylalanine 28, 62-64, and 86-88; these read ALE and AVI. 91–92 is a (2S)-2-hydroxy-3-oxobutyl phosphate binding site; the sequence is ET. Histidine 94 (proton donor) is an active-site residue. A 5-amino-6-(D-ribitylamino)uracil-binding site is contributed by asparagine 119. Arginine 133 lines the (2S)-2-hydroxy-3-oxobutyl phosphate pocket.

Belongs to the DMRL synthase family.

It carries out the reaction (2S)-2-hydroxy-3-oxobutyl phosphate + 5-amino-6-(D-ribitylamino)uracil = 6,7-dimethyl-8-(1-D-ribityl)lumazine + phosphate + 2 H2O + H(+). Its pathway is cofactor biosynthesis; riboflavin biosynthesis; riboflavin from 2-hydroxy-3-oxobutyl phosphate and 5-amino-6-(D-ribitylamino)uracil: step 1/2. In terms of biological role, catalyzes the formation of 6,7-dimethyl-8-ribityllumazine by condensation of 5-amino-6-(D-ribitylamino)uracil with 3,4-dihydroxy-2-butanone 4-phosphate. This is the penultimate step in the biosynthesis of riboflavin. This Azoarcus sp. (strain BH72) protein is 6,7-dimethyl-8-ribityllumazine synthase.